A 422-amino-acid polypeptide reads, in one-letter code: 3-phosphoshikimate 1-carboxyvinyltransferase (422 aa).

Residues lysine 20, serine 21, and arginine 25 each coordinate 3-phosphoshikimate. Lysine 20 lines the phosphoenolpyruvate pocket. Phosphoenolpyruvate contacts are provided by glycine 90 and arginine 118. Residues serine 163, serine 164, glutamine 165, serine 191, aspartate 306, and lysine 333 each coordinate 3-phosphoshikimate. Glutamine 165 is a phosphoenolpyruvate binding site. The active-site Proton acceptor is the aspartate 306. Phosphoenolpyruvate contacts are provided by arginine 337 and arginine 378.

Belongs to the EPSP synthase family. In terms of assembly, monomer.

It localises to the cytoplasm. The enzyme catalyses 3-phosphoshikimate + phosphoenolpyruvate = 5-O-(1-carboxyvinyl)-3-phosphoshikimate + phosphate. It participates in metabolic intermediate biosynthesis; chorismate biosynthesis. In terms of biological role, catalyzes the transfer of the enolpyruvyl moiety of phosphoenolpyruvate (PEP) to the 5-hydroxyl of shikimate-3-phosphate (S3P) to produce enolpyruvyl shikimate-3-phosphate and inorganic phosphate. This is 3-phosphoshikimate 1-carboxyvinyltransferase from Methanocella arvoryzae (strain DSM 22066 / NBRC 105507 / MRE50).